The chain runs to 286 residues: NAD kinase (286 aa).

Asp66 acts as the Proton acceptor in catalysis. Residues 66–67 (DG), 137–138 (ND), Arg148, Arg165, Asp167, and 178–183 (TAYSMS) each bind NAD(+).

The protein belongs to the NAD kinase family. A divalent metal cation is required as a cofactor.

The protein resides in the cytoplasm. It carries out the reaction NAD(+) + ATP = ADP + NADP(+) + H(+). Its function is as follows. Involved in the regulation of the intracellular balance of NAD and NADP, and is a key enzyme in the biosynthesis of NADP. Catalyzes specifically the phosphorylation on 2'-hydroxyl of the adenosine moiety of NAD to yield NADP. In Chlorobium chlorochromatii (strain CaD3), this protein is NAD kinase.